The chain runs to 931 residues: Kinesin heavy chain (931 aa).

The Kinesin motor domain occupies 6 to 329; that stretch reads SIKVVARFRP…LRFGMRAKSI (324 aa). Residues 87–94 and 237–244 contribute to the ATP site; these read GQTGAGKS and GSEKVGKT. Residues 342-864 adopt a coiled-coil conformation; the sequence is AELKSLLKKA…VKERLELAKA (523 aa). Disordered regions lie at residues 388-465 and 886-931; these read TTDA…EKQL and AKPL…FTKS. A compositionally biased stretch (polar residues) spans 402 to 419; it reads STRPSTPSLISDSRSETP. The segment covering 432–456 has biased composition (basic and acidic residues); the sequence is LDKDEREEFLRRENELQDQISEKES. A compositionally biased stretch (polar residues) spans 902–931; the sequence is PTIQNLQGQNEGNTSSGSSSKRASWFFTKS.

The protein belongs to the TRAFAC class myosin-kinesin ATPase superfamily. Kinesin family. Kinesin subfamily.

The protein resides in the cytoplasm. It is found in the cytoskeleton. Functionally, kinesin is a microtubule-associated force-producing protein that may play a role in organelle transport. Its motor activity is directed toward the microtubule's plus end. The chain is Kinesin heavy chain (KLP1) from Gibberella moniliformis (Maize ear and stalk rot fungus).